We begin with the raw amino-acid sequence, 909 residues long: Zinc finger and BTB domain-containing protein 41 (909 aa).

A BTB domain is found at 88–152 (CDLLIIVEGK…LYTSEFFVYK (65 aa)). The segment at 207 to 230 (HQCKFCSRHFCYKKSLENHLAKTH) adopts a C2H2-type 1 zinc-finger fold. The interval 252–344 (RSKRNRKCPV…PEAGDSVGNV (93 aa)) is disordered. Residues 266 to 275 (TSDDEQESGD) are compositionally biased toward acidic residues. The span at 284 to 295 (NFDKEKSDRNDS) shows a compositional bias: basic and acidic residues. A compositionally biased stretch (acidic residues) spans 296-322 (EDPGSEYNAEEDELEEEMSDEYSDIEE). 13 consecutive C2H2-type zinc fingers follow at residues 361-383 (LQCP…TRVH), 389-411 (FECD…RKKH), 422-445 (HKCP…KRFH), 463-485 (WKCD…MILH), 491-514 (FKCT…EKFH), 518-541 (FPCD…ECTH), 547-569 (WTCF…LRIH), 575-597 (HLCS…LRVH), 603-625 (YECD…KKIH), 631-654 (HQCE…KSVH), 668-690 (HQCD…FRTH), 696-718 (YKCQ…LVIH), and 724-747 (FNCQ…DHVH).

The protein resides in the nucleus. May be involved in transcriptional regulation. This Homo sapiens (Human) protein is Zinc finger and BTB domain-containing protein 41 (ZBTB41).